Here is a 341-residue protein sequence, read N- to C-terminus: NADH-ubiquinone oxidoreductase chain 2 (341 aa).

The next 9 helical transmembrane spans lie at 8–28, 60–80, 95–115, 121–141, 146–166, 195–215, 238–258, 273–293, and 321–341; these read ILFITIMIIGTLITVTSNSWL, YFLTQVLASTVLLFSSILLML, MIIMSALLLKSGAAPFHFWFP, LTWMNALMLMTWQKIAPLMLI, IKYLLLISVILSVIIGAIGGL, SIWLIYFFFYSFLSFVLTFMF, FTLFMNFLSLGGLPPFLGFLP, FMLTLMMMSTLITLFFYLRIC, and MIMTFFSIFGLFLISLFYFMF.

Belongs to the complex I subunit 2 family.

It is found in the mitochondrion inner membrane. The catalysed reaction is a ubiquinone + NADH + 5 H(+)(in) = a ubiquinol + NAD(+) + 4 H(+)(out). Core subunit of the mitochondrial membrane respiratory chain NADH dehydrogenase (Complex I) that is believed to belong to the minimal assembly required for catalysis. Complex I functions in the transfer of electrons from NADH to the respiratory chain. The immediate electron acceptor for the enzyme is believed to be ubiquinone. This Drosophila melanogaster (Fruit fly) protein is NADH-ubiquinone oxidoreductase chain 2 (mt:ND2).